An 833-amino-acid polypeptide reads, in one-letter code: MIPVTATLIRHRLRHLRHRIRFKSTSVSPFHLPLNHPTYLIWSANTSLGKTLVSTGIAASFLLQQPSSSATKLLYLKPIQTGFPSDSDSRFVFSKLDSLSLRRQIPISISNSVLHSSLPAAKSLGLNVEVSESGMCSLNFRDEKTVTGAPELLCKTLYAWEAAISPHLAAERENATVEDSVVLQMIEKCLKEEMECGVKSEKSDLLCLVETAGGVASPGPSGTLQCDLYRPFRLPGILVGDGRLGGISGTIAAYESLKLRGYDIAAVVFEDHGLVNEVPLTSYLRNKVPVLVLPPVPKDPSDDLIEWFVESDGVFKALKETMVLANLERLERLNGMAKLAGEVFWWPFTQHKLVHQETVTVIDSRCGENFSIYKASDNSSLSQQFDACASWWTQGPDPTFQAELAREMGYTAARFGHVMFPENVYEPALKCAELLLDGVGKGWASRVYFSDNGSTAIEIALKMAFRKFCVDHNFCEATEEEKHIVVKVIALRGSYHGDTLGAMEAQAPSPYTGFLQQPWYTGRGLFLDPPTVFLSNGSWNISLPESFSEIAPEYGTFTSRDEIFDKSRDASTLARIYSAYLSKHLQEHSGVRQSAHVGALIIEPVIHGAGGMHMVDPLFQRVLVNECRNRKIPVIFDEVFTGFWRLGVETTTELLGCKPDIACFAKLLTGGMVPLAVTLATDAVFDSFSGDSKLKALLHGHSYSAHAMGCATAAKAIQWFKDPETNHNITSQGKTLRELWDEELVQQISSHSAVQRVVVIGTLFALELKADASNSGYASLYAKSLLIMLREDGIFTRPLGNVIYLMCGPCTSPEICRRLLTKLYKRLGEFNRT.

Residues 1 to 23 (MIPVTATLIRHRLRHLRHRIRFK) constitute a mitochondrion transit peptide. The dethiobiotin synthetase stretch occupies residues 36 to 299 (HPTYLIWSAN…VLVLPPVPKD (264 aa)). 47 to 52 (SLGKTL) contacts ATP. Thr51 is a binding site for Mg(2+). Thr81 contributes to the substrate binding site. Asp88 serves as a coordination point for Mg(2+). Residues Asp97, 210–213 (ETAG), and 270–271 (ED) each bind ATP. A Mg(2+)-binding site is contributed by Glu210. Residues 332-830 (RLNGMAKLAG…TKLYKRLGEF (499 aa)) are 7,8-diamino-pelargonic acid aminotransferase. 391–392 (WW) serves as a coordination point for (8S)-8-amino-7-oxononanoate. 453–454 (GS) contributes to the pyridoxal 5'-phosphate binding site. Tyr495 is a binding site for (8S)-8-amino-7-oxononanoate. ATP-binding positions include 518–520 (PWY) and Glu545. Asp637 contributes to the pyridoxal 5'-phosphate binding site. Lys666 and Gly700 together coordinate (8S)-8-amino-7-oxononanoate. At Lys666 the chain carries N6-(pyridoxal phosphate)lysine. Residue 701 to 702 (HS) coordinates pyridoxal 5'-phosphate. (8S)-8-amino-7-oxononanoate is bound at residue Arg797.

In the N-terminal section; belongs to the dethiobiotin synthetase family. It in the C-terminal section; belongs to the class-III pyridoxal-phosphate-dependent aminotransferase family. BioA subfamily. Homodimer. Mg(2+) serves as cofactor. The cofactor is pyridoxal 5'-phosphate.

It is found in the mitochondrion matrix. It catalyses the reaction (7R,8S)-7,8-diammoniononanoate + CO2 + ATP = (4R,5S)-dethiobiotin + ADP + phosphate + 3 H(+). The enzyme catalyses (8S)-8-amino-7-oxononanoate + S-adenosyl-L-methionine = S-adenosyl-4-methylsulfanyl-2-oxobutanoate + (7R,8S)-7,8-diammoniononanoate. It functions in the pathway cofactor biosynthesis; biotin biosynthesis; biotin from 7,8-diaminononanoate: step 1/2. Its pathway is cofactor biosynthesis; biotin biosynthesis; 7,8-diaminononanoate from 8-amino-7-oxononanoate (SAM route): step 1/1. In terms of biological role, bifunctional enzyme that catalyzes two different reactions involved in the biotin biosynthesis. Functionally, catalyzes a mechanistically unusual reaction, the ATP-dependent insertion of CO2 between the N7 and N8 nitrogen atoms of 7,8-diaminopelargonic acid (DAPA) to form an ureido ring. Its function is as follows. Catalyzes the transfer of the alpha-amino group from S-adenosyl-L-methionine (SAM) to 7-keto-8-aminopelargonic acid (KAPA) to form 7,8-diaminopelargonic acid (DAPA). It is the only aminotransferase known to utilize SAM as an amino donor. This Arabidopsis thaliana (Mouse-ear cress) protein is Bifunctional dethiobiotin synthetase/7,8-diamino-pelargonic acid aminotransferase, mitochondrial.